Reading from the N-terminus, the 160-residue chain is Cytochrome b6-f complex subunit 4 (160 aa).

Helical transmembrane passes span 36–56, 95–115, and 131–151; these read ILFT…GLAI, LLGI…PFIE, and AVFL…CFPI.

This sequence belongs to the cytochrome b family. PetD subfamily. In terms of assembly, the 4 large subunits of the cytochrome b6-f complex are cytochrome b6, subunit IV (17 kDa polypeptide, PetD), cytochrome f and the Rieske protein, while the 4 small subunits are PetG, PetL, PetM and PetN. The complex functions as a dimer.

Its subcellular location is the cellular thylakoid membrane. Functionally, component of the cytochrome b6-f complex, which mediates electron transfer between photosystem II (PSII) and photosystem I (PSI), cyclic electron flow around PSI, and state transitions. This is Cytochrome b6-f complex subunit 4 from Picosynechococcus sp. (strain ATCC 27264 / PCC 7002 / PR-6) (Agmenellum quadruplicatum).